Consider the following 568-residue polypeptide: Calcium-dependent protein kinase 5 (568 aa).

In terms of domain architecture, Protein kinase spans 125–379; the sequence is EIDRYKLGKG…VEQVLKHRWF (255 aa). ATP is bound by residues 131–139 and Lys154; that span reads LGKGSYGNV. Catalysis depends on Asp245, which acts as the Proton acceptor. The J domain autoinhibitory motif signature appears at 400–408; the sequence is KFKEFHKLC. Residues 400–435 form a j domain region; sequence KFKEFHKLCKIKKLAVTCIAYQLNEKDIGKLKKTFE. Residues 409 to 418 carry the J domain EF-hand interaction motif motif; sequence KIKKLAVTCI. 4 EF-hand domains span residues 425–460, 462–495, 496–531, and 534–568; these read KDIGKLKKTFEAFDHNGDGVLTISEIFQCLKVNDNE, DRELYFLLKQLDTDGNGLIDYTEFLAACLDHSIF, QQDVICRNAFNVFDLDGDGVITKDELFKILSFSAVQ, and FSKEIIENLIKEVDSNNDGFIDYDEFYKMMTGVKE. Residues Asp438, Asn440, Asp442, Glu449, Asp473, Asp475, Asn477, Glu484, Asp509, Asp511, Asp513, Glu520, Asp547, Asn549, Asp551, and Glu558 each coordinate Ca(2+).

Belongs to the protein kinase superfamily. Ser/Thr protein kinase family. CDPK subfamily. It depends on Mg(2+) as a cofactor. Post-translationally, may be palmitoylated. Autophosphorylated in vitro.

It localises to the cytoplasm. It is found in the cytoplasmic vesicle. The protein localises to the secretory vesicle. Its subcellular location is the microneme membrane. The protein resides in the cell membrane. The catalysed reaction is L-seryl-[protein] + ATP = O-phospho-L-seryl-[protein] + ADP + H(+). The enzyme catalyses L-threonyl-[protein] + ATP = O-phospho-L-threonyl-[protein] + ADP + H(+). With respect to regulation, activated by calcium. Upon calcium binding to the EF-hand domains, the C-terminus of the junction domain (J domain) undergoes a conformational change which results in the dissociation of the pseudo-substrate inhibitory motif from the catalytic domain. This, in turn, may facilitate the autophosphorylation of the activation loop at Thr-285, which leads to the kinase activation. Its function is as follows. Calcium-dependent protein kinase which acts as a sensor and effector of intracellular Ca(2+) levels probably in part downstream of cGMP-activated PKG kinase. Plays a central role in host erythrocytes and hepatocytes infection cycles. During the liver stage, involved in sporozoite motility and thus in sporozoite invasion of host hepatocytes, probably together with CDPK1 and CDPK4. Involved in merosome egress from host hepatocytes, probably together with CDPK4. Required for the release of hepatic merozoites from merosomes in the host blood stream. During the asexual blood stage, required for merozoite egress from host erythrocytes by triggering microneme secretion. Phosphorylates transporter NPT1 at late schizont stage. This is Calcium-dependent protein kinase 5 from Plasmodium falciparum (isolate 3D7).